We begin with the raw amino-acid sequence, 150 residues long: Small ribosomal subunit protein uS19y (150 aa).

Belongs to the universal ribosomal protein uS19 family.

The protein resides in the cytoplasm. The chain is Small ribosomal subunit protein uS19y (RPS15C) from Arabidopsis thaliana (Mouse-ear cress).